The sequence spans 282 residues: BURP domain-containing protein BNM2A (282 aa).

Positions 1–26 (MASLRFSVTFPALLSLLLLSLWVVEA) are cleaved as a signal peptide. Positions 60 to 282 (FFKISDLKLG…PLDNIVWVSK (223 aa)) constitute a BURP domain.

Expressed in the radicle and cotyledon of germinating seeds 2 days post-imbibition (DPI), in stems and roots of 30-DPI young plants and in floral buds, but not in fully open flowers or leaves. Expressed in the embryo and seed coat tissues of developing seeds. The protein accumulates only in seeds and only long after transcript accumulation becomes evident.

It is found in the protein storage vacuole. The sequence is that of BURP domain-containing protein BNM2A from Brassica napus (Rape).